A 326-amino-acid polypeptide reads, in one-letter code: Probable iron chelatin transport system permease protein HP_0889 (326 aa).

10 helical membrane passes run 7-27, 64-84, 91-111, 113-133, 142-162, 164-184, 187-207, 241-261, 275-295, and 301-321; these read IALA…ESLS, ILAL…QTIF, PFLL…IAVV, SNIA…VLAM, LSLV…AGAI, FFVI…SLSL, YKDC…LFLL, VASA…LVIP, LLLS…VVAK, and DLPV…WLLF.

This sequence belongs to the binding-protein-dependent transport system permease family. FecCD subfamily.

The protein localises to the cell inner membrane. In terms of biological role, part of a binding-protein-dependent transport system for an iron chelatin; probably responsible for the translocation of the substrate across the membrane. The polypeptide is Probable iron chelatin transport system permease protein HP_0889 (Helicobacter pylori (strain ATCC 700392 / 26695) (Campylobacter pylori)).